The sequence spans 106 residues: Large ribosomal subunit protein uL24 (106 aa).

It belongs to the universal ribosomal protein uL24 family. As to quaternary structure, part of the 50S ribosomal subunit.

One of two assembly initiator proteins, it binds directly to the 5'-end of the 23S rRNA, where it nucleates assembly of the 50S subunit. Functionally, one of the proteins that surrounds the polypeptide exit tunnel on the outside of the subunit. The chain is Large ribosomal subunit protein uL24 from Acidithiobacillus ferrooxidans (strain ATCC 53993 / BNL-5-31) (Leptospirillum ferrooxidans (ATCC 53993)).